The sequence spans 220 residues: Sugar transporter SWEET1 (220 aa).

Transmembrane regions (helical) follow at residues 9–29 (LMTF…IMPL), 44–64 (VAGL…SYAL), 70–90 (TMLF…FNYW), 106–126 (VMIA…NTVD), 138–158 (LSSV…AIVI), 167–187 (IINV…FGLL), and 191–211 (IYIY…LTLI). The MtN3/slv 1 domain occupies 12–92 (FIQFCATFIT…IYYVFNYWKN (81 aa)). Residues 134–217 (RLGFLSSVVC…LTLIKLYPPQ (84 aa)) enclose the MtN3/slv 2 domain.

Belongs to the SWEET sugar transporter family.

The protein resides in the golgi apparatus membrane. It localises to the cell membrane. Functionally, mediates both low-affinity uptake and efflux of sugar across the membrane. This Dictyostelium discoideum (Social amoeba) protein is Sugar transporter SWEET1 (slc50a1).